Here is a 418-residue protein sequence, read N- to C-terminus: UDP-N-acetyl-D-mannosamine dehydrogenase (418 aa).

NAD(+) contacts are provided by Tyr10, Ile11, Asp30, Thr85, and Thr119. The UDP-N-acetyl-alpha-D-mannosaminouronate site is built by Arg152, Val153, Lys204, Asn208, Arg211, His242, Arg244, Thr249, and Gly255. Residue Lys204 is the Proton donor/acceptor of the active site. The active-site Nucleophile is the Cys258. Lys261 provides a ligand contact to NAD(+). 2 residues coordinate UDP-N-acetyl-alpha-D-mannosaminouronate: Tyr318 and Lys319. Arg326 lines the NAD(+) pocket. Arg398 contributes to the UDP-N-acetyl-alpha-D-mannosaminouronate binding site.

Belongs to the UDP-glucose/GDP-mannose dehydrogenase family. As to quaternary structure, homodimer.

It carries out the reaction UDP-N-acetyl-alpha-D-mannosamine + 2 NAD(+) + H2O = UDP-N-acetyl-alpha-D-mannosaminouronate + 2 NADH + 3 H(+). Functionally, catalyzes the four-electron oxidation of UDP-N-acetyl-D-mannosamine (UDP-ManNAc), reducing NAD(+) and releasing UDP-N-acetylmannosaminuronic acid (UDP-ManNAcA). This is UDP-N-acetyl-D-mannosamine dehydrogenase from Pyrococcus horikoshii (strain ATCC 700860 / DSM 12428 / JCM 9974 / NBRC 100139 / OT-3).